Here is a 281-residue protein sequence, read N- to C-terminus: Protoheme IX farnesyltransferase (281 aa).

The next 9 helical transmembrane spans lie at 16-36, 38-58, 75-95, 101-121, 129-149, 150-170, 202-224, 228-250, and 261-281; these read TFLL…GADF, FVIA…INMW, VPAG…IFAI, FLVS…DIVV, KSPY…LGGW, VAVQ…LLWI, ASWA…YVLL, IFYL…KFAL, and YKLA…GVFL.

This sequence belongs to the UbiA prenyltransferase family. Protoheme IX farnesyltransferase subfamily.

The protein resides in the cell membrane. It carries out the reaction heme b + (2E,6E)-farnesyl diphosphate + H2O = Fe(II)-heme o + diphosphate. Its pathway is porphyrin-containing compound metabolism; heme O biosynthesis; heme O from protoheme: step 1/1. In terms of biological role, converts heme B (protoheme IX) to heme O by substitution of the vinyl group on carbon 2 of heme B porphyrin ring with a hydroxyethyl farnesyl side group. This is Protoheme IX farnesyltransferase from Archaeoglobus fulgidus (strain ATCC 49558 / DSM 4304 / JCM 9628 / NBRC 100126 / VC-16).